The primary structure comprises 187 residues: GTPase KRas (187 aa).

GTP is bound by residues Gly10–Ala18, Val29–Thr35, Ala59–Gly60, and Asn116–Ala119. The Effector region motif lies at Tyr32 to Tyr40. Residues Glu168 to Leu187 are disordered. Cys184 carries the post-translational modification Cysteine methyl ester. Cys184 carries the S-farnesyl cysteine lipid modification. Residues Ser185–Leu187 constitute a propeptide, removed in mature form.

Belongs to the small GTPase superfamily. Ras family.

It is found in the cell membrane. Its subcellular location is the cytoplasm. It carries out the reaction GTP + H2O = GDP + phosphate + H(+). Its activity is regulated as follows. Alternates between an inactive form bound to GDP and an active form bound to GTP. Activated by a guanine nucleotide-exchange factor (GEF) and inactivated by a GTPase-activating protein (GAP). In terms of biological role, ras proteins bind GDP/GTP and possess intrinsic GTPase activity. Plays an important role in the regulation of cell proliferation. In Xenopus laevis (African clawed frog), this protein is GTPase KRas (kras).